The following is a 157-amino-acid chain: 2-C-methyl-D-erythritol 2,4-cyclodiphosphate synthase (157 aa).

2 residues coordinate a divalent metal cation: Asp-9 and His-11. 4-CDP-2-C-methyl-D-erythritol 2-phosphate-binding positions include 9–11 (DVH) and 35–36 (HS). His-43 is an a divalent metal cation binding site. 4-CDP-2-C-methyl-D-erythritol 2-phosphate contacts are provided by residues 57–59 (DIG), 62–66 (FPETD), 133–136 (TTME), Phe-140, and Lys-143.

The protein belongs to the IspF family. As to quaternary structure, homotrimer. Requires a divalent metal cation as cofactor.

It carries out the reaction 4-CDP-2-C-methyl-D-erythritol 2-phosphate = 2-C-methyl-D-erythritol 2,4-cyclic diphosphate + CMP. The protein operates within isoprenoid biosynthesis; isopentenyl diphosphate biosynthesis via DXP pathway; isopentenyl diphosphate from 1-deoxy-D-xylulose 5-phosphate: step 4/6. Functionally, involved in the biosynthesis of isopentenyl diphosphate (IPP) and dimethylallyl diphosphate (DMAPP), two major building blocks of isoprenoid compounds. Catalyzes the conversion of 4-diphosphocytidyl-2-C-methyl-D-erythritol 2-phosphate (CDP-ME2P) to 2-C-methyl-D-erythritol 2,4-cyclodiphosphate (ME-CPP) with a corresponding release of cytidine 5-monophosphate (CMP). The protein is 2-C-methyl-D-erythritol 2,4-cyclodiphosphate synthase of Enterococcus faecalis (strain ATCC 700802 / V583).